Consider the following 271-residue polypeptide: MLPTVFIVSDGTGITAETFAHSILSQFDQKFRLVRLPFVDSLEKAYATVEKINDAAVHDGRRAIVFTTLVDSESNDIVKRSNALVLDMFQRFVEPLEQELELKSSHAMGRGHQNADTEEYKTRIEAINFSLAHDDGQSNRNLSEADVILVGVSRSGKTPTSLYLAMQYGVKAANYPLIPEDFERGKLPSALTPHRDKLFGLSIDPQRLSEIRNERRPGSKYAAPENCRYEINEAEAMMRREGIKWLSSTHKSIEEIATTILQEIRLDRQSY.

151–158 is an ADP binding site; it reads GVSRSGKT.

This sequence belongs to the pyruvate, phosphate/water dikinase regulatory protein family. PSRP subfamily.

The catalysed reaction is [pyruvate, water dikinase] + ADP = [pyruvate, water dikinase]-phosphate + AMP + H(+). The enzyme catalyses [pyruvate, water dikinase]-phosphate + phosphate + H(+) = [pyruvate, water dikinase] + diphosphate. Bifunctional serine/threonine kinase and phosphorylase involved in the regulation of the phosphoenolpyruvate synthase (PEPS) by catalyzing its phosphorylation/dephosphorylation. This Burkholderia ambifaria (strain MC40-6) protein is Putative phosphoenolpyruvate synthase regulatory protein.